The sequence spans 498 residues: MEKYIMSLDQGTTSSRCIIFNKKGEIVSVAQKEFTQIYPKAGWVEHDPLEIWGKQAGVAGEALNIARISPEQIAGIGITNQRETTVVWNKRTGMPVYNAIVWQCRRTAGYCDELREKGIDKTIKEKTGLMLDAYFSATKIKWILDNVEGARELAEKGDLLFGNIDTWLIWNMTKGKIHVTDYTNASRTMLFNIHELKWDEELLEILDIPKSMLPEVKPSSCVYGETDEILFGVSIPISGDAGDQQAALFGQTCFNAGMAKNTYGTGCFLLMNTGEKAVDSKNGLLTTIAVGIDGKVEYALEGSIFIGGAVIQWLRDELRMVKTAQETEKYATEVEDNNGVYLVPAFVGIGAPYWDSYARGTILGLTRGAKKEHIIRAALESMAYQTHDVLKAMEEDSGIELKALKVDGGACQNNFLMQFQSDILGVEVDRPEVVETTALGAAYLAGLAVGYWKDRNEISQNWAISRSFAPAMEDEKREKLIKGWHKAVTKAMDWEDKE.

Thr12 contacts ADP. Residues Thr12, Thr13, and Ser14 each contribute to the ATP site. Thr12 provides a ligand contact to sn-glycerol 3-phosphate. Arg16 contributes to the ADP binding site. Arg82, Glu83, Tyr134, and Asp243 together coordinate sn-glycerol 3-phosphate. Arg82, Glu83, Tyr134, Asp243, and Gln244 together coordinate glycerol. The ADP site is built by Thr265 and Gly308. ATP is bound by residues Thr265, Gly308, Gln312, and Gly409. ADP contacts are provided by Gly409 and Asn413.

The protein belongs to the FGGY kinase family. As to quaternary structure, homotetramer and homodimer (in equilibrium).

It carries out the reaction glycerol + ATP = sn-glycerol 3-phosphate + ADP + H(+). It participates in polyol metabolism; glycerol degradation via glycerol kinase pathway; sn-glycerol 3-phosphate from glycerol: step 1/1. Activated by phosphorylation and inhibited by fructose 1,6-bisphosphate (FBP). Key enzyme in the regulation of glycerol uptake and metabolism. Catalyzes the phosphorylation of glycerol to yield sn-glycerol 3-phosphate. This Clostridium botulinum (strain 657 / Type Ba4) protein is Glycerol kinase.